The chain runs to 495 residues: Leucine aminopeptidase 2 (495 aa).

An N-terminal signal peptide occupies residues 1–21; it reads MKTQLLSLGVALTAISQGVIA. Residues 124–218 enclose the PA domain; sequence PPADKITAEL…ADGKNLASLV (95 aa). N-linked (GlcNAc...) asparagine glycans are attached at residues N142 and N235. Residues H259 and D271 each contribute to the Zn(2+) site. A glycan (N-linked (GlcNAc...) asparagine) is linked at N272. Residue E303 is the Proton acceptor of the active site. Positions 304 and 332 each coordinate Zn(2+). N352 is a glycosylation site (N-linked (GlcNAc...) asparagine). A Zn(2+)-binding site is contributed by H430. The interval 464 to 495 is disordered; the sequence is GFPTRPKTGKRDVSPRGQSMPGGGCGHHSVFM.

Belongs to the peptidase M28 family. M28A subfamily. As to quaternary structure, monomer. Zn(2+) is required as a cofactor.

It localises to the secreted. In terms of biological role, extracellular aminopeptidase that releases a wide variety of amino acids from natural peptides and contributes to pathogenicity. The polypeptide is Leucine aminopeptidase 2 (LAP2) (Arthroderma otae (strain ATCC MYA-4605 / CBS 113480) (Microsporum canis)).